Reading from the N-terminus, the 297-residue chain is Phosphatidylserine decarboxylase proenzyme (297 aa).

Catalysis depends on charge relay system; for autoendoproteolytic cleavage activity residues aspartate 100, histidine 157, and serine 263. Catalysis depends on serine 263, which acts as the Schiff-base intermediate with substrate; via pyruvic acid; for decarboxylase activity. Residue serine 263 is modified to Pyruvic acid (Ser); by autocatalysis.

This sequence belongs to the phosphatidylserine decarboxylase family. PSD-B subfamily. Prokaryotic type I sub-subfamily. Heterodimer of a large membrane-associated beta subunit and a small pyruvoyl-containing alpha subunit. Pyruvate serves as cofactor. Post-translationally, is synthesized initially as an inactive proenzyme. Formation of the active enzyme involves a self-maturation process in which the active site pyruvoyl group is generated from an internal serine residue via an autocatalytic post-translational modification. Two non-identical subunits are generated from the proenzyme in this reaction, and the pyruvate is formed at the N-terminus of the alpha chain, which is derived from the carboxyl end of the proenzyme. The autoendoproteolytic cleavage occurs by a canonical serine protease mechanism, in which the side chain hydroxyl group of the serine supplies its oxygen atom to form the C-terminus of the beta chain, while the remainder of the serine residue undergoes an oxidative deamination to produce ammonia and the pyruvoyl prosthetic group on the alpha chain. During this reaction, the Ser that is part of the protease active site of the proenzyme becomes the pyruvoyl prosthetic group, which constitutes an essential element of the active site of the mature decarboxylase.

It localises to the cell membrane. It catalyses the reaction a 1,2-diacyl-sn-glycero-3-phospho-L-serine + H(+) = a 1,2-diacyl-sn-glycero-3-phosphoethanolamine + CO2. Its pathway is phospholipid metabolism; phosphatidylethanolamine biosynthesis; phosphatidylethanolamine from CDP-diacylglycerol: step 2/2. In terms of biological role, catalyzes the formation of phosphatidylethanolamine (PtdEtn) from phosphatidylserine (PtdSer). This chain is Phosphatidylserine decarboxylase proenzyme, found in Actinobacillus pleuropneumoniae serotype 5b (strain L20).